Reading from the N-terminus, the 315-residue chain is Cysteine synthase (315 aa).

Residues Asn-8 and Arg-35 each coordinate hydrogen sulfide. Position 42 is an N6-(pyridoxal phosphate)lysine (Lys-42). Pyridoxal 5'-phosphate contacts are provided by residues Asn-72 and 177-181; that span reads GTGGT. Leu-269 serves as a coordination point for hydrogen sulfide. Residue Ser-273 participates in pyridoxal 5'-phosphate binding.

This sequence belongs to the cysteine synthase/cystathionine beta-synthase family. Homodimer. Requires pyridoxal 5'-phosphate as cofactor.

It catalyses the reaction O-acetyl-L-serine + hydrogen sulfide = L-cysteine + acetate. It participates in amino-acid biosynthesis; L-cysteine biosynthesis; L-cysteine from L-serine: step 2/2. The protein is Cysteine synthase (cysK) of Buchnera aphidicola subsp. Acyrthosiphon pisum (strain APS) (Acyrthosiphon pisum symbiotic bacterium).